A 627-amino-acid polypeptide reads, in one-letter code: MQNYNAKSIEVLTGLDPVKKRPGMYTNIENPNHLIQEIIDNSVDEVLAGFASKINITLYEDNSIEVADDGRGMPVDIHPEHKMSGIELIMTKLHSGGKFSNKNYTHSGGLHGVGVSVVNALSTRLEAEIKRDGNVYHIVFEDGFKTKDLEIIDNVGKKNTGTKIRFWPNKKYFDDIKVNFKALKNLLEAKAILCKALTIKYSNEIKKEKLTWHFETGLKGYLDHKLEAETLPAEPFIIDNFSNGDSYLDAVFCWCEDLSESIKNSYVNLIPTPQDGTHVTGLKNGIYDAIKAYIEKNSLSVKNIKITANDSFAQLNYVISVKITNPQFAGQTKEKLSNKDVTNFVATAVKDLLTIWLNQNPDEARQIVENISKVAQKRINADKKTTRKRIMNTTIRLPGKLTDCISSDVNSTELFIVEGDSAGGSAKQARDKNFQAVLPLKGKILNSWELDADTIMNSQEIHNIATAIGVDPDSDDISALRYNKICILADADSDGLHIATLLCAMFLKHFRKLIENGHIYIAQPPLFRIDIGKSTFYALDENERDTILTKNSKLPGKVNIMRFKGLGEMNPAQLRESAMDVSSRRLLQLTISDVYDDTEMLDMLLAKKRAKDRRDWLENYGDRASVE.

ATP is bound by residues Tyr4, Asn41, Asp68, 109–115, and Lys333; that span reads GLHGVGV. A Toprim domain is found at 412-525; sequence TELFIVEGDS…NGHIYIAQPP (114 aa). Mg(2+) is bound by residues Glu418, Asp490, and Asp492.

This sequence belongs to the type II topoisomerase family. ParE type 1 subfamily. As to quaternary structure, heterotetramer composed of ParC and ParE. Mg(2+) is required as a cofactor. Requires Mn(2+) as cofactor. It depends on Ca(2+) as a cofactor.

It catalyses the reaction ATP-dependent breakage, passage and rejoining of double-stranded DNA.. Pyrrolopyrimidines inhibit both GyrB and its paralog in topoisomerase IV (parE). In terms of biological role, topoisomerase IV is essential for chromosome segregation. It relaxes supercoiled DNA. Performs the decatenation events required during the replication of a circular DNA molecule. The protein is DNA topoisomerase 4 subunit B of Francisella tularensis subsp. holarctica (strain LVS).